A 362-amino-acid polypeptide reads, in one-letter code: Chorismate synthase (362 aa).

R46 contributes to the NADP(+) binding site. FMN-binding positions include 121–123 (RAS), 237–238 (NA), G277, 292–296 (KPTPS), and R318.

Belongs to the chorismate synthase family. As to quaternary structure, homotetramer. It depends on FMNH2 as a cofactor.

The catalysed reaction is 5-O-(1-carboxyvinyl)-3-phosphoshikimate = chorismate + phosphate. It functions in the pathway metabolic intermediate biosynthesis; chorismate biosynthesis; chorismate from D-erythrose 4-phosphate and phosphoenolpyruvate: step 7/7. Its function is as follows. Catalyzes the anti-1,4-elimination of the C-3 phosphate and the C-6 proR hydrogen from 5-enolpyruvylshikimate-3-phosphate (EPSP) to yield chorismate, which is the branch point compound that serves as the starting substrate for the three terminal pathways of aromatic amino acid biosynthesis. This reaction introduces a second double bond into the aromatic ring system. In Campylobacter lari (strain RM2100 / D67 / ATCC BAA-1060), this protein is Chorismate synthase.